Consider the following 370-residue polypeptide: Glutamate 5-kinase (370 aa).

ATP is bound at residue K13. Positions 52, 139, and 151 each coordinate substrate. Residues S171–D172 and S211–K217 contribute to the ATP site. The PUA domain occupies K275 to R353.

It belongs to the glutamate 5-kinase family.

The protein resides in the cytoplasm. It carries out the reaction L-glutamate + ATP = L-glutamyl 5-phosphate + ADP. It participates in amino-acid biosynthesis; L-proline biosynthesis; L-glutamate 5-semialdehyde from L-glutamate: step 1/2. Its function is as follows. Catalyzes the transfer of a phosphate group to glutamate to form L-glutamate 5-phosphate. The polypeptide is Glutamate 5-kinase (Thermus thermophilus (strain ATCC BAA-163 / DSM 7039 / HB27)).